A 200-amino-acid chain; its full sequence is Imidazole glycerol phosphate synthase subunit HisH (200 aa).

Residues 2–200 (KVAIVEYGVG…LGEVLTGASR (199 aa)) form the Glutamine amidotransferase type-1 domain. The active-site Nucleophile is the C79. Active-site residues include H179 and E181.

As to quaternary structure, heterodimer of HisH and HisF.

It is found in the cytoplasm. The enzyme catalyses 5-[(5-phospho-1-deoxy-D-ribulos-1-ylimino)methylamino]-1-(5-phospho-beta-D-ribosyl)imidazole-4-carboxamide + L-glutamine = D-erythro-1-(imidazol-4-yl)glycerol 3-phosphate + 5-amino-1-(5-phospho-beta-D-ribosyl)imidazole-4-carboxamide + L-glutamate + H(+). It carries out the reaction L-glutamine + H2O = L-glutamate + NH4(+). It functions in the pathway amino-acid biosynthesis; L-histidine biosynthesis; L-histidine from 5-phospho-alpha-D-ribose 1-diphosphate: step 5/9. IGPS catalyzes the conversion of PRFAR and glutamine to IGP, AICAR and glutamate. The HisH subunit catalyzes the hydrolysis of glutamine to glutamate and ammonia as part of the synthesis of IGP and AICAR. The resulting ammonia molecule is channeled to the active site of HisF. This chain is Imidazole glycerol phosphate synthase subunit HisH, found in Methanopyrus kandleri (strain AV19 / DSM 6324 / JCM 9639 / NBRC 100938).